The following is a 77-amino-acid chain: Acyl carrier protein (77 aa).

Residues 1–76 (MENFDKVKDI…DAVKYINSLE (76 aa)) enclose the Carrier domain. The residue at position 36 (S36) is an O-(pantetheine 4'-phosphoryl)serine.

This sequence belongs to the acyl carrier protein (ACP) family. Post-translationally, 4'-phosphopantetheine is transferred from CoA to a specific serine of apo-ACP by AcpS. This modification is essential for activity because fatty acids are bound in thioester linkage to the sulfhydryl of the prosthetic group.

Its subcellular location is the cytoplasm. It participates in lipid metabolism; fatty acid biosynthesis. Functionally, carrier of the growing fatty acid chain in fatty acid biosynthesis. The chain is Acyl carrier protein from Staphylococcus epidermidis (strain ATCC 12228 / FDA PCI 1200).